We begin with the raw amino-acid sequence, 298 residues long: Nucleotide-binding protein MAV_3359 (298 aa).

18–25 contributes to the ATP binding site; that stretch reads GLSGAGRG. Residue 69-72 participates in GTP binding; sequence DVRS.

Belongs to the RapZ-like family.

Displays ATPase and GTPase activities. The protein is Nucleotide-binding protein MAV_3359 of Mycobacterium avium (strain 104).